We begin with the raw amino-acid sequence, 276 residues long: 3,4-dihydroxyphenylacetate 2,3-dioxygenase (276 aa).

Fe cation serves as cofactor.

It carries out the reaction 3,4-dihydroxyphenylacetate + O2 = 2-hydroxy-5-carboxymethylmuconate semialdehyde + H(+). Its pathway is aromatic compound metabolism; 4-hydroxyphenylacetate degradation; pyruvate and succinate semialdehyde from 4-hydroxyphenylacetate: step 2/7. In terms of biological role, transforms homoprotocatechuic acid (HPC) into 5-carboxymethyl-2-hydroxy-muconic semialdehyde (CHMS). This Escherichia coli protein is 3,4-dihydroxyphenylacetate 2,3-dioxygenase (hpcB).